A 190-amino-acid chain; its full sequence is Acireductone dioxygenase (190 aa).

Fe(2+) contacts are provided by His-101, His-103, Glu-107, and His-145. Ni(2+) contacts are provided by His-101, His-103, Glu-107, and His-145.

The protein belongs to the acireductone dioxygenase (ARD) family. Monomer. Fe(2+) serves as cofactor. It depends on Ni(2+) as a cofactor.

It carries out the reaction 1,2-dihydroxy-5-(methylsulfanyl)pent-1-en-3-one + O2 = 3-(methylsulfanyl)propanoate + CO + formate + 2 H(+). The catalysed reaction is 1,2-dihydroxy-5-(methylsulfanyl)pent-1-en-3-one + O2 = 4-methylsulfanyl-2-oxobutanoate + formate + 2 H(+). It functions in the pathway amino-acid biosynthesis; L-methionine biosynthesis via salvage pathway; L-methionine from S-methyl-5-thio-alpha-D-ribose 1-phosphate: step 5/6. Functionally, catalyzes 2 different reactions between oxygen and the acireductone 1,2-dihydroxy-3-keto-5-methylthiopentene (DHK-MTPene) depending upon the metal bound in the active site. Fe-containing acireductone dioxygenase (Fe-ARD) produces formate and 2-keto-4-methylthiobutyrate (KMTB), the alpha-ketoacid precursor of methionine in the methionine recycle pathway. Ni-containing acireductone dioxygenase (Ni-ARD) produces methylthiopropionate, carbon monoxide and formate, and does not lie on the methionine recycle pathway. The sequence is that of Acireductone dioxygenase from Saccharopolyspora erythraea (strain ATCC 11635 / DSM 40517 / JCM 4748 / NBRC 13426 / NCIMB 8594 / NRRL 2338).